A 347-amino-acid polypeptide reads, in one-letter code: Sesquiterpene synthase M422DRAFT_47084 (347 aa).

Residues Asp-93, Asn-228, Ser-232, and Glu-236 each coordinate Mg(2+). The short motif at 93-97 is the DDXXD motif element; that stretch reads DEYTD. Residues Arg-318 and Tyr-319 each coordinate (2E,6E)-farnesyl diphosphate.

Belongs to the terpene synthase family. Requires Mg(2+) as cofactor.

It carries out the reaction (2E,6E)-farnesyl diphosphate = viridiflorene + diphosphate. Functionally, terpene cyclase that catalyzes the cyclization of farnesyl diphosphate (FPP) to viridiflorene and viridiflorol. This chain is Sesquiterpene synthase M422DRAFT_47084, found in Sphaerobolus stellatus (strain SS14).